Here is a 404-residue protein sequence, read N- to C-terminus: Argininosuccinate synthase (404 aa).

ATP contacts are provided by residues 10 to 18 (AFSGGLDTS) and Ala37. Residues Tyr88 and Ser93 each coordinate L-citrulline. An ATP-binding site is contributed by Gly118. Thr120, Asn124, and Asp125 together coordinate L-aspartate. Asn124 lines the L-citrulline pocket. L-citrulline-binding residues include Arg128, Ser179, Ser188, Glu264, and Tyr276.

Belongs to the argininosuccinate synthase family. Type 1 subfamily. As to quaternary structure, homotetramer.

It localises to the cytoplasm. The catalysed reaction is L-citrulline + L-aspartate + ATP = 2-(N(omega)-L-arginino)succinate + AMP + diphosphate + H(+). It functions in the pathway amino-acid biosynthesis; L-arginine biosynthesis; L-arginine from L-ornithine and carbamoyl phosphate: step 2/3. This chain is Argininosuccinate synthase, found in Nitrosomonas eutropha (strain DSM 101675 / C91 / Nm57).